The primary structure comprises 72 residues: Gas vesicle protein A (72 aa).

It belongs to the gas vesicle GvpA family. In terms of assembly, the gas vesicle shell is 2 nm thick and consists of a single layer of this protein. It forms helical ribs nearly perpendicular to the long axis of the vesicle.

Its subcellular location is the gas vesicle shell. In terms of biological role, gas vesicles are hollow, gas filled proteinaceous nanostructures found in some microorganisms. During planktonic growth they allow positioning of the organism at a favorable depth for light or nutrient acquisition. GvpA forms the protein shell. The protein is Gas vesicle protein A of Haloquadratum walsbyi (strain DSM 16790 / HBSQ001).